A 1210-amino-acid polypeptide reads, in one-letter code: Epidermal growth factor receptor (1210 aa).

Positions 1–24 are cleaved as a signal peptide; the sequence is MRPSGTARTTLLVLLTALCAAGGA. Over 25 to 647 the chain is Extracellular; that stretch reads LEEKKVCQGT…VWPSGPKIPS (623 aa). Cys31 and Cys58 are disulfide-bonded. The stretch at 75-300 is one Approximate repeat; it reads DLSFLKTIQE…CVKKCPRNYV (226 aa). N-linked (GlcNAc...) asparagine glycosylation is found at Asn128, Asn175, and Asn196. 13 cysteine pairs are disulfide-bonded: Cys157-Cys187, Cys190-Cys199, Cys194-Cys207, Cys215-Cys223, Cys219-Cys231, Cys232-Cys240, Cys236-Cys248, Cys251-Cys260, Cys264-Cys291, Cys295-Cys307, Cys311-Cys326, Cys329-Cys333, and Cys337-Cys362. Position 229 is a phosphoserine (Ser229). N-linked (GlcNAc...) asparagine glycans are attached at residues Asn352, Asn413, and Asn444. The Approximate repeat unit spans residues 390–600; the sequence is RELEILKTVK…CVKTCPAGIM (211 aa). Intrachain disulfides connect Cys470/Cys499, Cys506/Cys515, Cys510/Cys523, Cys526/Cys535, Cys539/Cys555, Cys558/Cys571, Cys562/Cys579, Cys582/Cys591, Cys595/Cys617, Cys620/Cys628, and Cys624/Cys636. The N-linked (GlcNAc...) asparagine glycan is linked to Asn528. Asn568 carries N-linked (GlcNAc...) asparagine glycosylation. 2 N-linked (GlcNAc...) asparagine glycosylation sites follow: Asn603 and Asn623. A helical transmembrane segment spans residues 648 to 670; that stretch reads IATGIVGGLLFIVVVALGIGLFM. Over 671–1210 the chain is Cytoplasmic; that stretch reads RRRHIVRKRT…APPSSEFIGA (540 aa). Position 680 is a phosphothreonine; by PKC and PKD/PRKD1 (Thr680). Residues 690–706 are important for dimerization, phosphorylation and activation; that stretch reads LVEPLTPSGEAPNQAHL. Thr695 bears the Phosphothreonine; by PKD/PRKD1 mark. Ser697 is subject to Phosphoserine. The Protein kinase domain occupies 714 to 981; that stretch reads FKKIKVLGSG…KMARDPQRYL (268 aa). Lys718 is covalently cross-linked (Glycyl lysine isopeptide (Lys-Gly) (interchain with G-Cter in ubiquitin)). Residue 720 to 728 participates in ATP binding; that stretch reads LGSGAFGTV. Lys739 is covalently cross-linked (Glycyl lysine isopeptide (Lys-Gly) (interchain with G-Cter in ubiquitin)). Residue Lys747 coordinates ATP. The residue at position 747 (Lys747) is an N6-(2-hydroxyisobutyryl)lysine. Residues Lys756 and Lys759 each participate in a glycyl lysine isopeptide (Lys-Gly) (interchain with G-Cter in ubiquitin) cross-link. Residue 792-793 coordinates ATP; that stretch reads TQ. The Proton acceptor role is filled by Asp839. Asp857 lines the ATP pocket. Lys869 is covalently cross-linked (Glycyl lysine isopeptide (Lys-Gly) (interchain with G-Cter in ubiquitin)). Position 871 is a phosphotyrosine (Tyr871). Residues Lys931, Lys962, and Lys972 each participate in a glycyl lysine isopeptide (Lys-Gly) (interchain with G-Cter in ubiquitin) cross-link. Phosphoserine occurs at positions 993 and 997. 2 positions are modified to phosphotyrosine; by autocatalysis: Tyr1000 and Tyr1018. 2 positions are modified to phosphoserine: Ser1028 and Ser1041. Thr1043 carries the phosphothreonine modification. Ser1044 is modified (phosphoserine). Residue Cys1051 is the site of S-palmitoyl cysteine attachment. Position 1069 is a phosphotyrosine (Tyr1069). Phosphoserine occurs at positions 1070 and 1071. Residues Tyr1092 and Tyr1110 each carry the phosphotyrosine; by autocatalysis modification. Residues 1113-1137 are disordered; that stretch reads QPLHPAPGRDLHYQNPHSNAVGNPE. Residues 1127-1137 show a composition bias toward polar residues; it reads NPHSNAVGNPE. A lipid anchor (S-palmitoyl cysteine) is attached at Cys1146. Residue Ser1166 is modified to Phosphoserine. At Tyr1172 the chain carries Phosphotyrosine; by autocatalysis. Residue Tyr1197 is modified to Phosphotyrosine. Arg1199 carries the post-translational modification Omega-N-methylarginine.

It belongs to the protein kinase superfamily. Tyr protein kinase family. EGF receptor subfamily. As to quaternary structure, binding of the ligand triggers homo- and/or heterodimerization of the receptor triggering its autophosphorylation. Heterodimer with ERBB2. Forms a complex with CCDC88A/GIV (via SH2-like region) and GNAI3 which leads to enhanced EGFR signaling and triggering of cell migration; binding of CCDC88A requires autophosphorylation of the EGFR C-terminal region, and ligand stimulation is required for recruitment of GNAI3 to the complex. Interacts with ERRFI1; inhibits dimerization of the kinase domain and autophosphorylation. Part of a complex with ERBB2 and either PIK3C2A or PIK3C2B. Interacts with GRB2; an adapter protein coupling the receptor to downstream signaling pathways. Interacts with GAB2; involved in signaling downstream of EGFR. Interacts with STAT3; mediates EGFR downstream signaling in cell proliferation. Interacts with RIPK1; involved in NF-kappa-B activation. Interacts (autophosphorylated) with CBL, CBLB and CBLC; involved in EGFR ubiquitination and regulation; interaction with CBL is reduced in the presence of tensin TNS4. Interacts with SOCS5; regulates EGFR degradation through ELOC- and ELOB-mediated ubiquitination and proteasomal degradation. Interacts with PRMT5; methylates EGFR and enhances interaction with PTPN6. Interacts (phosphorylated) with PTPN6; inhibits EGFR-dependent activation of MAPK/ERK. Interacts with COPG1; essential for regulation of EGF-dependent nuclear transport of EGFR by retrograde trafficking from the Golgi to the ER. Interacts with TNK2; this interaction is dependent on EGF stimulation and kinase activity of EGFR. Interacts with PCNA; positively regulates PCNA. Interacts with PELP1. Interacts with MUC1. Interacts with AP2M1. Interacts with FER. Interacts (via SH2 domains) with GRB2, NCK1 and NCK2. Interacts with EPS8; mediates EPS8 phosphorylation. Interacts with ATXN2. Interacts with GAREM1. Interacts (ubiquitinated) with ANKRD13A/B/D; the interaction is direct and may regulate EGFR internalization after EGF stimulation. Interacts with GPER1; the interaction occurs in an estrogen-dependent manner. Interacts (via C-terminal cytoplasmic kinase domain) with ZPR1 (via zinc fingers). Interacts with RNF115 and RNF126. Interacts with GPRC5A (via its transmembrane domain). Interacts with FAM83B; positively regulates EGFR inducing its autophosphorylation in absence of stimulation by EGF. Interacts with LAPTM4B; positively correlates with EGFR activation. Interacts with STX19. Interacts with CD44. Interacts with PGRMC1; the interaction requires PGRMC1 homodimerization. Interacts with PIKFYVE. Interacts with NEU3. Interacts with TRAF4. Interacts with the ant venom OMEGA-myrmeciitoxin(02)-Mg1a. Interacts with CD82; this interaction facilitates ligand-induced endocytosis of the receptor and its subsequent desensitization. Post-translationally, monoubiquitinated and polyubiquitinated upon EGF stimulation; which does not affect tyrosine kinase activity or signaling capacity but may play a role in lysosomal targeting. Polyubiquitin linkage is mainly through 'Lys-63', but linkage through 'Lys-48', 'Lys-11' and 'Lys-29' also occurs. Deubiquitinated by OTUD7B, preventing degradation. Ubiquitinated by RNF115 and RNF126. Ubiquitinated by ZNRF1 or CBL at different lysines in response to EGF stimulation; leading to recruitment of the ESCRT machinery and subsequent degradation in the lysosomes. Deubiquitinated by UCHL1 leading to the inhibition of its degradation. In terms of processing, phosphorylated on Tyr residues in response to EGF. Phosphorylation at Ser-697 is partial and occurs only if Thr-695 is phosphorylated. Phosphorylation at Thr-680 and Thr-695 by PRKD1 inhibits EGF-induced MAPK8/JNK1 activation. Dephosphorylation by PTPRJ prevents endocytosis and stabilizes the receptor at the plasma membrane. Autophosphorylation at Tyr-1199 is stimulated by methylation at Arg-1199 and enhances interaction with PTPN6. Autophosphorylation at Tyr-1092 and/or Tyr-1110 recruits STAT3. Dephosphorylated by PTPN1 and PTPN2. Palmitoylated on Cys residues by ZDHHC20. Palmitoylation inhibits internalization after ligand binding, and increases the persistence of tyrosine-phosphorylated EGFR at the cell membrane. Palmitoylation increases the amplitude and duration of EGFR signaling. Post-translationally, methylated. Methylation at Arg-1199 by PRMT5 stimulates phosphorylation at Tyr-1197.

It localises to the cell membrane. The protein localises to the endoplasmic reticulum membrane. Its subcellular location is the golgi apparatus membrane. The protein resides in the nucleus membrane. It is found in the endosome. It localises to the endosome membrane. The protein localises to the nucleus. It catalyses the reaction L-tyrosyl-[protein] + ATP = O-phospho-L-tyrosyl-[protein] + ADP + H(+). With respect to regulation, endocytosis and inhibition of the activated EGFR by phosphatases like PTPRJ and PTPRK constitute immediate regulatory mechanisms. Upon EGF-binding phosphorylates EPS15 that regulates EGFR endocytosis and activity. Moreover, inducible feedback inhibitors including LRIG1, SOCS4, SOCS5 and ERRFI1 constitute alternative regulatory mechanisms for the EGFR signaling. Functionally, receptor tyrosine kinase binding ligands of the EGF family and activating several signaling cascades to convert extracellular cues into appropriate cellular responses. Known ligands include EGF, TGFA/TGF-alpha, AREG, epigen/EPGN, BTC/betacellulin, epiregulin/EREG and HBEGF/heparin-binding EGF. Ligand binding triggers receptor homo- and/or heterodimerization and autophosphorylation on key cytoplasmic residues. The phosphorylated receptor recruits adapter proteins like GRB2 which in turn activates complex downstream signaling cascades. Activates at least 4 major downstream signaling cascades including the RAS-RAF-MEK-ERK, PI3 kinase-AKT, PLCgamma-PKC and STATs modules. May also activate the NF-kappa-B signaling cascade. Also directly phosphorylates other proteins like RGS16, activating its GTPase activity and probably coupling the EGF receptor signaling to the G protein-coupled receptor signaling. Also phosphorylates MUC1 and increases its interaction with SRC and CTNNB1/beta-catenin. Positively regulates cell migration via interaction with CCDC88A/GIV which retains EGFR at the cell membrane following ligand stimulation, promoting EGFR signaling which triggers cell migration. Plays a role in enhancing learning and memory performance. Plays a role in mammalian pain signaling (long-lasting hypersensitivity). This chain is Epidermal growth factor receptor, found in Mus musculus (Mouse).